Consider the following 413-residue polypeptide: MKRVSEQAGNPDGNPQAHVPGMPVIAVIGDGQLARMMQTAAIELGQSLRLLAGARDASAAQVCADVVLGDYTNYDDLLKAVDGATAVTFDHEHVPNEHLTALIDAGYNDQPQPAALINAQDKLVMRERLAELGAPVPRFAPIESAQDAYDFWTLTSGQVCLKARRGGYDGKGVWFPNNESELTALVSDLSRRGVALMAEEKVGWSRELSVLVARTPSGEVATWPLTESVQRNGVCAEAVAPAPGVDPQLQQRAETLGEKIATELGVTGVLAVELFAFANESGAEDIAVNELAMRPHNTGHWTLVGSVTSQFEQHLRAVMDEPLGDTSTLAPVTVMANVLGADEDQRCQWASVPRSGAPVPATKVHLYGKGIAQGRKIGHVNLTGEDEEATRRDARLAADFLVNAAWSDNWSAK.

The disordered stretch occupies residues 1–21; the sequence is MKRVSEQAGNPDGNPQAHVPG. ATP is bound by residues Lys-122, Lys-162, 199-202, Glu-207, and 289-290; these read EEKV and NE. Positions 126–319 constitute an ATP-grasp domain; that stretch reads RERLAELGAP…QFEQHLRAVM (194 aa).

Belongs to the PurK/PurT family. As to quaternary structure, homodimer.

The enzyme catalyses 5-amino-1-(5-phospho-beta-D-ribosyl)imidazole + hydrogencarbonate + ATP = 5-carboxyamino-1-(5-phospho-D-ribosyl)imidazole + ADP + phosphate + 2 H(+). It functions in the pathway purine metabolism; IMP biosynthesis via de novo pathway; 5-amino-1-(5-phospho-D-ribosyl)imidazole-4-carboxylate from 5-amino-1-(5-phospho-D-ribosyl)imidazole (N5-CAIR route): step 1/2. Catalyzes the ATP-dependent conversion of 5-aminoimidazole ribonucleotide (AIR) and HCO(3)(-) to N5-carboxyaminoimidazole ribonucleotide (N5-CAIR). In Corynebacterium ammoniagenes (Brevibacterium ammoniagenes), this protein is N5-carboxyaminoimidazole ribonucleotide synthase.